Reading from the N-terminus, the 522-residue chain is MSDAAAPEEQDELSGGSVQELLPGLQRDLEAEVIRGFIANIAIYPVLLLYFFGTFAYVTRNVVPYEFIDEQFHIGQTITYLKGHWFTWDPKITTPPGLYILGWLNYKVLKPLLKSWSTLTILRLVNAFGGLVYFPLVVLRPIFLFNAISFWPVALMSFPLMATYYYLYYTDVWSTIFIIQSLSIGLTMPFGLSKSIWLSALFAGISCLFRQTNIVWCGFIMLIVVERQAIIAKQFNTHGLNNYLKLFIHSVEEFQTLVLPYALNFVGFFLYLIWNRSITLGDKSNHNAGIHLVQVFYCFAFLTVFSVPLWFSKNFLRMYLERTNRKQVQVFFEIFLIMMVIRYFTKVHPFLLADNRHYTFYLFKRLINHNRRIIKYGLMAPIYHFCTFVYLEILRPSELLFDPISPLPIKDPNLLPVQLTHISWTALILCTFATVVPSPLFEPRYYILPYFFWRLFITCSAEPIWGEIVPGKSNEEPVTISSTSRLFLEFVWFILIDIVTLIIFVRYSFPWASEAFMQRIIW.

6 helical membrane passes run 36–56, 119–139, 142–162, 172–192, 205–225, and 254–274; these read GFIA…GTFA, LTIL…LVVL, IFLF…PLMA, VWST…PFGL, ISCL…LIVV, and FQTL…YLIW. An N-linked (GlcNAc...) asparagine glycan is attached at asparagine 275. The next 6 membrane-spanning stretches (helical) occupy residues 292-312, 330-350, 373-393, 421-441, 446-466, and 485-505; these read LVQV…LWFS, VFFE…VHPF, IIKY…YLEI, HISW…SPLF, YILP…PIWG, and RLFL…IIFV.

Belongs to the ALG10 glucosyltransferase family.

Its subcellular location is the endoplasmic reticulum membrane. It catalyses the reaction an alpha-D-Glc-(1-&gt;3)-alpha-D-Glc-(1-&gt;3)-alpha-D-Man-(1-&gt;2)-alpha-D-Man-(1-&gt;2)-alpha-D-Man-(1-&gt;3)-[alpha-D-Man-(1-&gt;2)-alpha-D-Man-(1-&gt;3)-[alpha-D-Man-(1-&gt;2)-alpha-D-Man-(1-&gt;6)]-alpha-D-Man-(1-&gt;6)]-beta-D-Man-(1-&gt;4)-beta-D-GlcNAc-(1-&gt;4)-alpha-D-GlcNAc-diphospho-di-trans,poly-cis-dolichol + a di-trans,poly-cis-dolichyl beta-D-glucosyl phosphate = a alpha-D-Glc-(1-&gt;2)-alpha-D-Glc-(1-&gt;3)-alpha-D-Glc-(1-&gt;3)-alpha-D-Man-(1-&gt;2)-alpha-D-Man-(1-&gt;2)-alpha-D-Man-(1-&gt;3)-[alpha-D-Man-(1-&gt;2)-alpha-D-Man-(1-&gt;3)-[alpha-D-Man-(1-&gt;2)-alpha-D-Man-(1-&gt;6)]-alpha-D-Man-(1-&gt;6)]-beta-D-Man-(1-&gt;4)-beta-D-GlcNAc-(1-&gt;4)-alpha-D-GlcNAc-diphospho-di-trans,poly-cis-dolichol + a di-trans,poly-cis-dolichyl phosphate + H(+). The protein operates within protein modification; protein glycosylation. Its function is as follows. Dol-P-Glc:Glc(2)Man(9)GlcNAc(2)-PP-Dol alpha-1,2-glucosyltransferase that operates in the biosynthetic pathway of dolichol-linked oligosaccharides, the glycan precursors employed in protein asparagine (N)-glycosylation. The assembly of dolichol-linked oligosaccharides begins on the cytosolic side of the endoplasmic reticulum membrane and finishes in its lumen. The sequential addition of sugars to dolichol pyrophosphate produces dolichol-linked oligosaccharides containing fourteen sugars, including two GlcNAcs, nine mannoses and three glucoses. Once assembled, the oligosaccharide is transferred from the lipid to nascent proteins by oligosaccharyltransferases. In the lumen of the endoplasmic reticulum, adds the third and last glucose residue from dolichyl phosphate glucose (Dol-P-Glc) onto the lipid-linked oligosaccharide intermediate Glc(2)Man(9)GlcNAc(2)-PP-Dol to produce Glc(3)Man(9)GlcNAc(2)-PP-Dol. The chain is Dol-P-Glc:Glc(2)Man(9)GlcNAc(2)-PP-Dol alpha-1,2-glucosyltransferase (ALG10) from Candida glabrata (strain ATCC 2001 / BCRC 20586 / JCM 3761 / NBRC 0622 / NRRL Y-65 / CBS 138) (Yeast).